The primary structure comprises 790 residues: Lon protease (790 aa).

Residues 23–220 enclose the Lon N-terminal domain; the sequence is LPIMPIFHTV…EITLIVNHQL (198 aa). Residue 372–379 participates in ATP binding; sequence GPPGTGKT. The Lon proteolytic domain maps to 608–789; sequence ISKPGIAMGL…REVLNIALSR (182 aa). Residues Ser-695 and Lys-738 contribute to the active site.

It belongs to the peptidase S16 family. As to quaternary structure, homohexamer. Organized in a ring with a central cavity.

It is found in the cytoplasm. It catalyses the reaction Hydrolysis of proteins in presence of ATP.. Functionally, ATP-dependent serine protease that mediates the selective degradation of mutant and abnormal proteins as well as certain short-lived regulatory proteins. Required for cellular homeostasis and for survival from DNA damage and developmental changes induced by stress. Degrades polypeptides processively to yield small peptide fragments that are 5 to 10 amino acids long. Binds to DNA in a double-stranded, site-specific manner. The polypeptide is Lon protease (Syntrophus aciditrophicus (strain SB)).